The primary structure comprises 106 residues: Replication restart protein PriB (106 aa).

The SSB domain maps to 4–103 (VNRLVLSGTV…LHAEQIELID (100 aa)).

Belongs to the PriB family. Homodimer. Interacts with PriA and DnaT. Component of the replication restart primosome. Primosome assembly occurs via a 'hand-off' mechanism. PriA binds to replication forks, subsequently PriB then DnaT bind; DnaT then displaces ssDNA to generate the helicase loading substrate.

Functionally, involved in the restart of stalled replication forks, which reloads the replicative helicase on sites other than the origin of replication; the PriA-PriB pathway is the major replication restart pathway. During primosome assembly it facilitates complex formation between PriA and DnaT on DNA; stabilizes PriA on DNA. Stimulates the DNA unwinding activity of PriA helicase. This Pectobacterium carotovorum subsp. carotovorum (strain PC1) protein is Replication restart protein PriB.